Here is a 154-residue protein sequence, read N- to C-terminus: Endoribonuclease YbeY (154 aa).

Positions 114, 118, and 124 each coordinate Zn(2+).

The protein belongs to the endoribonuclease YbeY family. It depends on Zn(2+) as a cofactor.

Its subcellular location is the cytoplasm. Functionally, single strand-specific metallo-endoribonuclease involved in late-stage 70S ribosome quality control and in maturation of the 3' terminus of the 16S rRNA. This is Endoribonuclease YbeY from Anaplasma phagocytophilum (strain HZ).